Here is a 70-residue protein sequence, read N- to C-terminus: Large ribosomal subunit protein bL31 (70 aa).

Zn(2+) contacts are provided by C16, C18, C37, and C40.

Belongs to the bacterial ribosomal protein bL31 family. Type A subfamily. As to quaternary structure, part of the 50S ribosomal subunit. It depends on Zn(2+) as a cofactor.

Its function is as follows. Binds the 23S rRNA. The sequence is that of Large ribosomal subunit protein bL31 from Shewanella halifaxensis (strain HAW-EB4).